A 443-amino-acid polypeptide reads, in one-letter code: MESLAALYKNHIVTLQERTRDVLARFKLDALLIHSGELFNVFLDDHPYPFKVNPQFKAWVPVTQVPNCWLLVDGVNKPKLWFYLPVDYWHNVEPLPTSFWTEEVEVVALPKADGIGSQLPAARGNIGYIGPVPERALQLDIAASNINPKGVIDYLHYYRAYKTDYELACMREAQKMAVSGHRAAEEAFRSGMSEFDINLAYLTATGHRDTDVPYSNIVALNEHAAVLHYTKLDHQAPSEMRSFLLDAGAEYNGYAADLTRTWSAKSDNDYAHLVKDVNDEQLALIATMKAGVSYVDYHIQFHQRIAKLLRKHQIITDMSEEAMVENDLTGPFMPHGIGHPLGLQVHDVAGFMQDDSGTHLAAPSKYPYLRCTRVLQPRMVLTIEPGIYFIESLLAPWREGPFSKHFNWQKIEALKPFGGIRIEDNVVIHENGVENMTRDLKLA.

Mn(2+) is bound by residues Asp246, Asp257, His339, Glu384, and Glu423.

The protein belongs to the peptidase M24B family. Bacterial-type prolidase subfamily. Mn(2+) is required as a cofactor.

The catalysed reaction is Xaa-L-Pro dipeptide + H2O = an L-alpha-amino acid + L-proline. Splits dipeptides with a prolyl residue in the C-terminal position. In Salmonella choleraesuis (strain SC-B67), this protein is Xaa-Pro dipeptidase.